The chain runs to 63 residues: Small ribosomal subunit protein eS31 (63 aa).

4 residues coordinate Zn(2+): Cys31, Cys34, Cys50, and Cys53.

It belongs to the eukaryotic ribosomal protein eS31 family. Part of the 30S ribosomal subunit. Requires Zn(2+) as cofactor.

The protein is Small ribosomal subunit protein eS31 (rps27ae) of Aeropyrum pernix (strain ATCC 700893 / DSM 11879 / JCM 9820 / NBRC 100138 / K1).